A 205-amino-acid chain; its full sequence is Glycerol-3-phosphate acyltransferase (205 aa).

The next 6 helical transmembrane spans lie at 5 to 25 (LIATVLFGYLLGSVSFSYIIA), 56 to 76 (ICVLLLDVAKGVAPALLAIAL), 84 to 104 (VPALAGLAAILGHNWPIYFGF), 114 to 134 (IGVVATLLFLPALCAGIVAIL), 144 to 164 (LGSLLFAVLTPIAALIMLPFF), and 165 to 185 (HYPLEYIYLAVLLAILSLWRH).

Belongs to the PlsY family. In terms of assembly, probably interacts with PlsX.

It is found in the cell membrane. The enzyme catalyses an acyl phosphate + sn-glycerol 3-phosphate = a 1-acyl-sn-glycero-3-phosphate + phosphate. Its pathway is lipid metabolism; phospholipid metabolism. Catalyzes the transfer of an acyl group from acyl-phosphate (acyl-PO(4)) to glycerol-3-phosphate (G3P) to form lysophosphatidic acid (LPA). This enzyme utilizes acyl-phosphate as fatty acyl donor, but not acyl-CoA or acyl-ACP. This is Glycerol-3-phosphate acyltransferase from Shouchella clausii (strain KSM-K16) (Alkalihalobacillus clausii).